A 234-amino-acid polypeptide reads, in one-letter code: PHD finger protein ING1 (234 aa).

The tract at residues 129 to 166 is disordered; sequence NNGKAGNAGEGGRGGRKKTRLATAASTAAASTGMTSSN. Over residues 149–165 the composition is skewed to low complexity; sequence LATAASTAAASTGMTSS. The segment at 178–227 adopts a PHD-type zinc-finger fold; the sequence is PTYCICNQVSFGEMVACDNNACKIEWFHFGCVGLKEQPKGKWYCPECATV. Zn(2+) is bound by residues Cys181, Cys183, Cys194, Cys199, His205, Cys208, Cys221, and Cys224.

This sequence belongs to the ING family. As to quaternary structure, interacts with H3K4me3 and to a lesser extent with H3K4me2. Ubiquitously expressed.

It localises to the nucleus. Functionally, histone-binding component that specifically recognizes H3 tails trimethylated on 'Lys-4' (H3K4me3), which mark transcription start sites of virtually all active genes. This chain is PHD finger protein ING1 (ING1), found in Arabidopsis thaliana (Mouse-ear cress).